The sequence spans 161 residues: Glycine-rich RNA-binding protein blt801 (161 aa).

The RRM domain occupies 6–84 (YRCFVGGLRW…RNITVNEAQS (79 aa)). A disordered region spans residues 72–161 (LDGRNITVNE…GGSGGGNWRE (90 aa)). Position 87 is a phosphoserine; by PKA (serine 87). The span at 89–161 (GGGGFGGGGG…GGSGGGNWRE (73 aa)) shows a compositional bias: gly residues.

Binds single-stranded DNA and homoribopolymers of guanine, uracil and adenine, but not cytosine. Also binds RNA, with a preference for RNA containing a high proportion of adenine within an open loop structure. Possibly has a role in RNA transcription or processing during stress. The chain is Glycine-rich RNA-binding protein blt801 from Hordeum vulgare (Barley).